A 386-amino-acid polypeptide reads, in one-letter code: Chaperone protein DnaJ (386 aa).

The J domain maps to 5 to 69 (DLYDVLGVKK…QKRAQYDQFG (65 aa)). The CR-type zinc finger occupies 140 to 224 (GKETSIKYNR…CHGAGVTEER (85 aa)). Zn(2+) contacts are provided by C153, C156, C170, C173, C196, C199, C212, and C215. CXXCXGXG motif repeat units lie at residues 153–160 (CHTCHGSG), 170–177 (CSTCHGQG), 196–203 (CPTCGGKG), and 212–219 (CDTCHGAG).

It belongs to the DnaJ family. As to quaternary structure, homodimer. It depends on Zn(2+) as a cofactor.

It localises to the cytoplasm. Its function is as follows. Participates actively in the response to hyperosmotic and heat shock by preventing the aggregation of stress-denatured proteins and by disaggregating proteins, also in an autonomous, DnaK-independent fashion. Unfolded proteins bind initially to DnaJ; upon interaction with the DnaJ-bound protein, DnaK hydrolyzes its bound ATP, resulting in the formation of a stable complex. GrpE releases ADP from DnaK; ATP binding to DnaK triggers the release of the substrate protein, thus completing the reaction cycle. Several rounds of ATP-dependent interactions between DnaJ, DnaK and GrpE are required for fully efficient folding. Also involved, together with DnaK and GrpE, in the DNA replication of plasmids through activation of initiation proteins. This chain is Chaperone protein DnaJ, found in Limosilactobacillus fermentum (strain NBRC 3956 / LMG 18251) (Lactobacillus fermentum).